A 396-amino-acid chain; its full sequence is MSKEKFERTKPHVNVGTIGHVDHGKTTLTAAITKIMSEARGGEFKDYADIDNAPEERERGITISTAHVEYESEARHYAHVDCPGHADYIKNMITGAAQMDGAIIVIAATDGPMAQTREHILLSKQVGVPYIVVYMNKADMVDDEELVELVELEIRELLDEYDFPGDDTPIIFGSALKALEGDMSDIGMSSIIKLVKALDTYIPTPKRDTDKSFLMPIEDVFSISGRGTVVTGRIEAGIVYVGDELEIVGIKDTQTTTCTGVEMFRKLLDSGEAGDNVGVLLRGTKREEVERGQVLAKPGSIKPHSKFEAEVYILSKDEGGRHTPFFNNYRPQFYFRTTDVTGACQLPDGVEMVMPGDNVKMQVELLSPIAMEDGLRFAIREGGRTVGAGVVSKVTD.

The 197-residue stretch at 10 to 206 (KPHVNVGTIG…ALDTYIPTPK (197 aa)) folds into the tr-type G domain. The G1 stretch occupies residues 19–26 (GHVDHGKT). A GTP-binding site is contributed by 19-26 (GHVDHGKT). Thr26 contacts Mg(2+). A G2 region spans residues 60-64 (GITIS). The tract at residues 81 to 84 (DCPG) is G3. GTP-binding positions include 81–85 (DCPGH) and 136–139 (NKAD). The G4 stretch occupies residues 136–139 (NKAD). A G5 region spans residues 174–176 (SAL).

It belongs to the TRAFAC class translation factor GTPase superfamily. Classic translation factor GTPase family. EF-Tu/EF-1A subfamily. In terms of assembly, monomer.

Its subcellular location is the cytoplasm. The enzyme catalyses GTP + H2O = GDP + phosphate + H(+). Its function is as follows. GTP hydrolase that promotes the GTP-dependent binding of aminoacyl-tRNA to the A-site of ribosomes during protein biosynthesis. The sequence is that of Elongation factor Tu 1 from Ruthia magnifica subsp. Calyptogena magnifica.